A 130-amino-acid chain; its full sequence is S-adenosylmethionine decarboxylase proenzyme (130 aa).

Serine 63 serves as the catalytic Schiff-base intermediate with substrate; via pyruvic acid. Serine 63 is modified (pyruvic acid (Ser); by autocatalysis). Catalysis depends on histidine 68, which acts as the Proton acceptor; for processing activity. Cysteine 83 (proton donor; for catalytic activity) is an active-site residue.

It belongs to the prokaryotic AdoMetDC family. Type 1 subfamily. As to quaternary structure, heterotetramer of two alpha and two beta chains arranged as a dimer of alpha/beta heterodimers. The cofactor is pyruvate. Post-translationally, is synthesized initially as an inactive proenzyme. Formation of the active enzyme involves a self-maturation process in which the active site pyruvoyl group is generated from an internal serine residue via an autocatalytic post-translational modification. Two non-identical subunits are generated from the proenzyme in this reaction, and the pyruvate is formed at the N-terminus of the alpha chain, which is derived from the carboxyl end of the proenzyme. The post-translation cleavage follows an unusual pathway, termed non-hydrolytic serinolysis, in which the side chain hydroxyl group of the serine supplies its oxygen atom to form the C-terminus of the beta chain, while the remainder of the serine residue undergoes an oxidative deamination to produce ammonia and the pyruvoyl group blocking the N-terminus of the alpha chain.

It carries out the reaction S-adenosyl-L-methionine + H(+) = S-adenosyl 3-(methylsulfanyl)propylamine + CO2. The protein operates within amine and polyamine biosynthesis; S-adenosylmethioninamine biosynthesis; S-adenosylmethioninamine from S-adenosyl-L-methionine: step 1/1. Catalyzes the decarboxylation of S-adenosylmethionine to S-adenosylmethioninamine (dcAdoMet), the propylamine donor required for the synthesis of the polyamines spermine and spermidine from the diamine putrescine. In Thermotoga petrophila (strain ATCC BAA-488 / DSM 13995 / JCM 10881 / RKU-1), this protein is S-adenosylmethionine decarboxylase proenzyme.